The chain runs to 576 residues: Zinc finger protein 791 (576 aa).

The region spanning 4–90 (VAFKDVSVSF…AETFSPNLSV (87 aa)) is the KRAB domain. C2H2-type zinc fingers lie at residues 100 to 122 (YECT…MRSH), 132 to 154 (YKCK…ERSH), 160 to 182 (YKCK…EQTH), 188 to 210 (YECK…ERIH), 216 to 238 (YECK…ERTH), 244 to 266 (YACK…MITH), 272 to 294 (YKCK…ERIH), 300 to 322 (YTCK…ERIH), 328 to 350 (YKCK…VRVH), 356 to 378 (YKCK…ERTH), 384 to 406 (YECK…KRNH), 412 to 434 (YECK…MITH), 440 to 462 (YKCR…ERTH), 468 to 490 (YECK…KRTH), 496 to 518 (YECK…MRMH), 524 to 546 (YKCK…TRIH), and 552 to 574 (LECK…MRMH).

The protein belongs to the krueppel C2H2-type zinc-finger protein family.

Its subcellular location is the nucleus. Functionally, may be involved in transcriptional regulation. The sequence is that of Zinc finger protein 791 (ZNF791) from Pongo abelii (Sumatran orangutan).